We begin with the raw amino-acid sequence, 303 residues long: Counting factor 50 (303 aa).

An N-terminal signal peptide occupies residues 1-24 (MNKMNNIFLIISSIILSIVIFVSG). The region spanning 28–240 (IDFSSEISVG…CSTSSGSASG (213 aa)) is the Ch-type lysozyme domain. N-linked (GlcNAc...) asparagine glycosylation occurs at Asn-67. Residue Glu-125 is part of the active site. Asn-170 carries N-linked (GlcNAc...) asparagine glycosylation. The segment at 226-303 (GSGSGCSTSS…GSGTGSGSSI (78 aa)) is S-G-S motif repeats. A compositionally biased stretch (low complexity) spans 236 to 292 (GSASGSASGSASGSASGSNSGSSNSGSSNSGSSNSGSNSGSSNSGSGNSGSSNSGSA). Residues 236–303 (GSASGSASGS…GSGTGSGSSI (68 aa)) form a disordered region. Positions 293 to 303 (SGSGTGSGSSI) are enriched in gly residues.

This sequence belongs to the glycosyl hydrolase 25 family. In terms of assembly, monomer. Component of the counting factor (CF) complex, which includes cf60, cf50, cf45-1 and ctnA.

The protein localises to the secreted. The catalysed reaction is Hydrolysis of (1-&gt;4)-beta-linkages between N-acetylmuramic acid and N-acetyl-D-glucosamine residues in a peptidoglycan and between N-acetyl-D-glucosamine residues in chitodextrins.. Functionally, cell-counting factor that limits the maximum size of the multicellular structure during aggregation. Has a very low lysozyme activity. The chain is Counting factor 50 (cf50-1) from Dictyostelium discoideum (Social amoeba).